The following is a 198-amino-acid chain: Small ribosomal subunit protein uS11 (198 aa).

Composition is skewed to low complexity over residues 1-11 (MSGTEAGAGEP) and 19-58 (EAAQPEAGAPDAGTPEASAPEAGAAQPEAGTQPEAGTAQP). 2 disordered regions span residues 1 to 72 (MSGT…TPAD) and 178 to 198 (DVTPIPHDTTRKKGGKRGRRV). Residues 187 to 198 (TRKKGGKRGRRV) show a composition bias toward basic residues.

Belongs to the universal ribosomal protein uS11 family. In terms of assembly, part of the 30S ribosomal subunit.

Located on the platform of the 30S subunit. The polypeptide is Small ribosomal subunit protein uS11 (Cenarchaeum symbiosum (strain A)).